The following is a 432-amino-acid chain: Adenosylhomocysteinase (432 aa).

The segment at 1 to 24 is disordered; it reads MSAYSPLSAQLDADTDVDVESTRT. Asp137 and Glu162 together coordinate substrate. 163–165 is an NAD(+) binding site; sequence TTT. Substrate contacts are provided by Lys192 and Asp196. Residues Asn197, 226–231, Glu249, Asn284, 305–307, and Asn352 contribute to the NAD(+) site; these read GYGYCG and AGH.

The protein belongs to the adenosylhomocysteinase family. Requires NAD(+) as cofactor.

Its subcellular location is the cytoplasm. It carries out the reaction S-adenosyl-L-homocysteine + H2O = L-homocysteine + adenosine. It functions in the pathway amino-acid biosynthesis; L-homocysteine biosynthesis; L-homocysteine from S-adenosyl-L-homocysteine: step 1/1. Functionally, may play a key role in the regulation of the intracellular concentration of adenosylhomocysteine. This chain is Adenosylhomocysteinase, found in Haloquadratum walsbyi (strain DSM 16790 / HBSQ001).